Reading from the N-terminus, the 333-residue chain is Anthranilate phosphoribosyltransferase (333 aa).

5-phospho-alpha-D-ribose 1-diphosphate is bound by residues G80, 83–84, T88, 90–93, 108–116, and S120; these read GD, NLST, and KHGNRSASG. G80 is an anthranilate binding site. S92 contributes to the Mg(2+) binding site. N111 is a binding site for anthranilate. Residue R166 participates in anthranilate binding. Residues D224 and E225 each coordinate Mg(2+).

The protein belongs to the anthranilate phosphoribosyltransferase family. Homodimer. The cofactor is Mg(2+).

The enzyme catalyses N-(5-phospho-beta-D-ribosyl)anthranilate + diphosphate = 5-phospho-alpha-D-ribose 1-diphosphate + anthranilate. It participates in amino-acid biosynthesis; L-tryptophan biosynthesis; L-tryptophan from chorismate: step 2/5. In terms of biological role, catalyzes the transfer of the phosphoribosyl group of 5-phosphorylribose-1-pyrophosphate (PRPP) to anthranilate to yield N-(5'-phosphoribosyl)-anthranilate (PRA). The polypeptide is Anthranilate phosphoribosyltransferase (Pyrobaculum arsenaticum (strain DSM 13514 / JCM 11321 / PZ6)).